The primary structure comprises 189 residues: Ribonuclease HII (189 aa).

The RNase H type-2 domain maps to 1 to 189 (MIAGVDEAGR…IAALLKNNKK (189 aa)). D6, E7, and D98 together coordinate a divalent metal cation.

It belongs to the RNase HII family. It depends on Mn(2+) as a cofactor. Mg(2+) is required as a cofactor.

The protein resides in the cytoplasm. The enzyme catalyses Endonucleolytic cleavage to 5'-phosphomonoester.. In terms of biological role, endonuclease that specifically degrades the RNA of RNA-DNA hybrids. In Dichelobacter nodosus (strain VCS1703A), this protein is Ribonuclease HII.